A 233-amino-acid polypeptide reads, in one-letter code: Large ribosomal subunit protein uL1 (233 aa).

This sequence belongs to the universal ribosomal protein uL1 family. Part of the 50S ribosomal subunit.

In terms of biological role, binds directly to 23S rRNA. The L1 stalk is quite mobile in the ribosome, and is involved in E site tRNA release. Its function is as follows. Protein L1 is also a translational repressor protein, it controls the translation of the L11 operon by binding to its mRNA. The chain is Large ribosomal subunit protein uL1 from Campylobacter concisus (strain 13826).